Here is a 119-residue protein sequence, read N- to C-terminus: Large ribosomal subunit protein bL20 (119 aa).

It belongs to the bacterial ribosomal protein bL20 family.

Binds directly to 23S ribosomal RNA and is necessary for the in vitro assembly process of the 50S ribosomal subunit. It is not involved in the protein synthesizing functions of that subunit. The polypeptide is Large ribosomal subunit protein bL20 (Dichelobacter nodosus (strain VCS1703A)).